Here is a 118-residue protein sequence, read N- to C-terminus: MICOS complex subunit MIC13 (118 aa).

The Mitochondrial matrix portion of the chain corresponds to 1–7 (MVARVWS). The helical transmembrane segment at 8 to 26 (LMRFLIKGSVAGGAVYLVY) threads the bilayer. At 27–118 (DQELLGPSDK…GWEYVKARTK (92 aa)) the chain is on the mitochondrial intermembrane side.

It belongs to the MICOS complex subunit Mic13 family. In terms of assembly, component of the mitochondrial contact site and cristae organizing system (MICOS) complex, composed of at least MICOS10/MIC10, CHCHD3/MIC19, CHCHD6/MIC25, APOO/MIC26, MICOS13/MIC13, APOOL/MIC27 and IMMT/MIC60. The complex associates with mitochondrial outer membrane proteins SAMM50, MTX1 and MTX2, and with HSPA9.

It localises to the mitochondrion inner membrane. In terms of biological role, component of the MICOS complex, a large protein complex of the mitochondrial inner membrane that plays crucial roles in the maintenance of crista junctions, inner membrane architecture, and formation of contact sites to the outer membrane. Constituent of mature MICOS complex, it is required for the formation of cristae junction (CJ) and maintenance of cristae morphology. Required for the incorporation of MICOS10/MIC10 into the MICOS complex. The protein is MICOS complex subunit MIC13 of Macaca fascicularis (Crab-eating macaque).